The primary structure comprises 943 residues: Isoleucine--tRNA ligase (943 aa).

The 'HIGH' region signature appears at 59–69; that stretch reads PYANGRIHLGH. Residue Glu-577 coordinates L-isoleucyl-5'-AMP. A 'KMSKS' region motif is present at residues 618–622; that stretch reads KMSKS. Residue Lys-621 participates in ATP binding. Residues Cys-906, Cys-909, Cys-926, and Cys-929 each contribute to the Zn(2+) site.

Belongs to the class-I aminoacyl-tRNA synthetase family. IleS type 1 subfamily. As to quaternary structure, monomer. Zn(2+) is required as a cofactor.

The protein localises to the cytoplasm. It catalyses the reaction tRNA(Ile) + L-isoleucine + ATP = L-isoleucyl-tRNA(Ile) + AMP + diphosphate. Functionally, catalyzes the attachment of isoleucine to tRNA(Ile). As IleRS can inadvertently accommodate and process structurally similar amino acids such as valine, to avoid such errors it has two additional distinct tRNA(Ile)-dependent editing activities. One activity is designated as 'pretransfer' editing and involves the hydrolysis of activated Val-AMP. The other activity is designated 'posttransfer' editing and involves deacylation of mischarged Val-tRNA(Ile). The chain is Isoleucine--tRNA ligase from Stenotrophomonas maltophilia (strain R551-3).